The primary structure comprises 237 residues: Leucyl/phenylalanyl-tRNA--protein transferase (237 aa).

It belongs to the L/F-transferase family.

It is found in the cytoplasm. It carries out the reaction N-terminal L-lysyl-[protein] + L-leucyl-tRNA(Leu) = N-terminal L-leucyl-L-lysyl-[protein] + tRNA(Leu) + H(+). The enzyme catalyses N-terminal L-arginyl-[protein] + L-leucyl-tRNA(Leu) = N-terminal L-leucyl-L-arginyl-[protein] + tRNA(Leu) + H(+). The catalysed reaction is L-phenylalanyl-tRNA(Phe) + an N-terminal L-alpha-aminoacyl-[protein] = an N-terminal L-phenylalanyl-L-alpha-aminoacyl-[protein] + tRNA(Phe). Functionally, functions in the N-end rule pathway of protein degradation where it conjugates Leu, Phe and, less efficiently, Met from aminoacyl-tRNAs to the N-termini of proteins containing an N-terminal arginine or lysine. The sequence is that of Leucyl/phenylalanyl-tRNA--protein transferase from Photobacterium profundum (strain SS9).